Here is a 447-residue protein sequence, read N- to C-terminus: GTPase Der (447 aa).

EngA-type G domains are found at residues 4–165 (KIIT…SIKE) and 180–357 (LQIV…KIWN). GTP is bound by residues 10–17 (GRPNVGKS), 57–61 (DTPGL), 119–122 (NKCE), 186–193 (GRPNAGKS), 233–237 (DTAGL), and 298–301 (NKWD). Positions 358–443 (KKITTGKLNE…PIRFTYVKNK (86 aa)) constitute a KH-like domain.

Belongs to the TRAFAC class TrmE-Era-EngA-EngB-Septin-like GTPase superfamily. EngA (Der) GTPase family. As to quaternary structure, associates with the 50S ribosomal subunit.

GTPase that plays an essential role in the late steps of ribosome biogenesis. This is GTPase Der from Rickettsia typhi (strain ATCC VR-144 / Wilmington).